Reading from the N-terminus, the 133-residue chain is Putative HTH-type transcriptional regulator YwnA (133 aa).

Positions 1-130 (MINSRLAVAI…ASKSLKDVMN (130 aa)) constitute an HTH rrf2-type domain. The H-T-H motif DNA-binding region spans 24-47 (SEIIADSVNTNPVVVRRMISLLKK).

The protein is Putative HTH-type transcriptional regulator YwnA (ywnA) of Bacillus subtilis (strain 168).